A 150-amino-acid polypeptide reads, in one-letter code: Transcription antitermination protein NusB (150 aa).

This sequence belongs to the NusB family.

Functionally, involved in transcription antitermination. Required for transcription of ribosomal RNA (rRNA) genes. Binds specifically to the boxA antiterminator sequence of the ribosomal RNA (rrn) operons. This chain is Transcription antitermination protein NusB, found in Chloroflexus aggregans (strain MD-66 / DSM 9485).